An 89-amino-acid polypeptide reads, in one-letter code: MSITAERKAALIKEYATVEGDTGSPEVQVAILTERINNLTDHFKDHKKDNHSRRGLLTMVSSRRSLLDYLKKKDEGRYSKLIGSLGIRR.

Belongs to the universal ribosomal protein uS15 family. In terms of assembly, part of the 30S ribosomal subunit. Forms a bridge to the 50S subunit in the 70S ribosome, contacting the 23S rRNA.

One of the primary rRNA binding proteins, it binds directly to 16S rRNA where it helps nucleate assembly of the platform of the 30S subunit by binding and bridging several RNA helices of the 16S rRNA. Functionally, forms an intersubunit bridge (bridge B4) with the 23S rRNA of the 50S subunit in the ribosome. The protein is Small ribosomal subunit protein uS15 of Rhizobium rhizogenes (strain K84 / ATCC BAA-868) (Agrobacterium radiobacter).